Here is a 522-residue protein sequence, read N- to C-terminus: Maturase K (522 aa).

It belongs to the intron maturase 2 family. MatK subfamily.

The protein resides in the plastid. It is found in the chloroplast. Usually encoded in the trnK tRNA gene intron. Probably assists in splicing its own and other chloroplast group II introns. The sequence is that of Maturase K from Iris domestica (Leopard lily).